Consider the following 300-residue polypeptide: uncharacterized protein (300 aa).

Over Met-1 to Gly-7 the chain is Periplasmic. The chain crosses the membrane as a helical span at residues Met-8–Ile-28. In terms of domain architecture, EamA 1 spans Val-16–Thr-145. Over Met-29–Leu-45 the chain is Cytoplasmic. The chain crosses the membrane as a helical span at residues Phe-46 to Leu-66. The Periplasmic portion of the chain corresponds to Lys-67 to Asp-71. A helical transmembrane segment spans residues Ala-72–Leu-92. Over Thr-93–Ala-99 the chain is Cytoplasmic. A helical transmembrane segment spans residues Ala-100–Ala-120. Residues Arg-121–Arg-124 lie on the Periplasmic side of the membrane. Residues Pro-125–Thr-145 traverse the membrane as a helical segment. Topologically, residues His-146–Ser-151 are cytoplasmic. Residues Leu-152 to Tyr-172 form a helical membrane-spanning segment. The 125-residue stretch at Phe-167 to Leu-291 folds into the EamA 2 domain. The Periplasmic portion of the chain corresponds to Thr-173–Gly-184. The helical transmembrane segment at Thr-185 to Ala-205 threads the bilayer. At Lys-206–Ser-216 the chain is on the cytoplasmic side. Residues Leu-217–Leu-237 form a helical membrane-spanning segment. The Periplasmic portion of the chain corresponds to Lys-238–Ser-263. The helical transmembrane segment at Leu-264–Ser-284 threads the bilayer. Over Ser-285–Ala-300 the chain is Cytoplasmic.

This sequence belongs to the EamA transporter family.

Its subcellular location is the cell inner membrane. This is an uncharacterized protein from Salmonella typhimurium (strain LT2 / SGSC1412 / ATCC 700720).